The primary structure comprises 148 residues: Zinc finger X-chromosomal protein (148 aa).

2 C2H2-type zinc fingers span residues 16-38 (IECD…KMVH) and 76-98 (HICV…MRIH).

Belongs to the krueppel C2H2-type zinc-finger protein family. ZFX/ZFY subfamily.

It is found in the nucleus. In terms of biological role, probable transcriptional activator. The chain is Zinc finger X-chromosomal protein (ZFX) from Sus scrofa (Pig).